We begin with the raw amino-acid sequence, 260 residues long: UPF0246 protein Bcenmc03_2247 (260 aa).

This sequence belongs to the UPF0246 family.

The protein is UPF0246 protein Bcenmc03_2247 of Burkholderia orbicola (strain MC0-3).